Consider the following 545-residue polypeptide: Chaperonin GroEL 3 (545 aa).

ATP contacts are provided by residues 30–33 (TLGP), K51, 87–91 (DGTTT), G415, and D496.

It belongs to the chaperonin (HSP60) family. As to quaternary structure, forms a cylinder of 14 subunits composed of two heptameric rings stacked back-to-back. Interacts with the co-chaperonin GroES.

It is found in the cytoplasm. It catalyses the reaction ATP + H2O + a folded polypeptide = ADP + phosphate + an unfolded polypeptide.. In terms of biological role, together with its co-chaperonin GroES, plays an essential role in assisting protein folding. The GroEL-GroES system forms a nano-cage that allows encapsulation of the non-native substrate proteins and provides a physical environment optimized to promote and accelerate protein folding. This Nitrobacter hamburgensis (strain DSM 10229 / NCIMB 13809 / X14) protein is Chaperonin GroEL 3.